A 211-amino-acid chain; its full sequence is Uracil phosphoribosyltransferase (211 aa).

30–34 (KGLVR) contributes to the GTP binding site. Residues Arg79, Arg104, and 133–141 (DPMLATGTT) each bind 5-phospho-alpha-D-ribose 1-diphosphate. Uracil-binding positions include Ile197 and 202–204 (GDA). Asp203 contributes to the 5-phospho-alpha-D-ribose 1-diphosphate binding site.

The protein belongs to the UPRTase family. Mg(2+) serves as cofactor.

The catalysed reaction is UMP + diphosphate = 5-phospho-alpha-D-ribose 1-diphosphate + uracil. It participates in pyrimidine metabolism; UMP biosynthesis via salvage pathway; UMP from uracil: step 1/1. With respect to regulation, allosterically activated by GTP. Functionally, catalyzes the conversion of uracil and 5-phospho-alpha-D-ribose 1-diphosphate (PRPP) to UMP and diphosphate. This is Uracil phosphoribosyltransferase from Pyrobaculum arsenaticum (strain DSM 13514 / JCM 11321 / PZ6).